Here is a 566-residue protein sequence, read N- to C-terminus: Phenylalanine--tRNA ligase beta subunit (566 aa).

The B5 domain maps to 287–362 (YFQEEVEFNV…IGEGLSSFNP (76 aa)). Mg(2+)-binding residues include Asp-340, Asp-346, Glu-349, and Asp-350.

This sequence belongs to the phenylalanyl-tRNA synthetase beta subunit family. Type 2 subfamily. In terms of assembly, tetramer of two alpha and two beta subunits. The cofactor is Mg(2+).

The protein localises to the cytoplasm. It carries out the reaction tRNA(Phe) + L-phenylalanine + ATP = L-phenylalanyl-tRNA(Phe) + AMP + diphosphate + H(+). The protein is Phenylalanine--tRNA ligase beta subunit of Borreliella burgdorferi (strain ATCC 35210 / DSM 4680 / CIP 102532 / B31) (Borrelia burgdorferi).